We begin with the raw amino-acid sequence, 162 residues long: Phenazine biosynthesis protein PhzA2 (162 aa).

The protein belongs to the PhzA/PhzB family.

The protein operates within antibiotic biosynthesis; phenazine biosynthesis. Its function is as follows. Involved in the biosynthesis of the antibiotic phenazine, a nitrogen-containing heterocyclic molecule having important roles in virulence, competition and biological control. PhzA2 (operon phzA2B2C2E2F2G2) has a role in the biosynthesis of the phenazine during both planktonic growth and biofilm development, and in host infection during biofilm development. The sequence is that of Phenazine biosynthesis protein PhzA2 from Pseudomonas aeruginosa (strain ATCC 15692 / DSM 22644 / CIP 104116 / JCM 14847 / LMG 12228 / 1C / PRS 101 / PAO1).